A 159-amino-acid chain; its full sequence is Phosphopantetheine adenylyltransferase (159 aa).

Ser-9 serves as a coordination point for substrate. Residues 9 to 10 and His-17 contribute to the ATP site; that span reads SF. Substrate is bound by residues Lys-41, Leu-73, and Lys-87. Residues 88–90, Glu-98, and 122–128 each bind ATP; these read GLR and YSFLSSS.

This sequence belongs to the bacterial CoaD family. As to quaternary structure, homohexamer. Mg(2+) is required as a cofactor.

The protein localises to the cytoplasm. It carries out the reaction (R)-4'-phosphopantetheine + ATP + H(+) = 3'-dephospho-CoA + diphosphate. Its pathway is cofactor biosynthesis; coenzyme A biosynthesis; CoA from (R)-pantothenate: step 4/5. Reversibly transfers an adenylyl group from ATP to 4'-phosphopantetheine, yielding dephospho-CoA (dPCoA) and pyrophosphate. The polypeptide is Phosphopantetheine adenylyltransferase (Streptomyces avermitilis (strain ATCC 31267 / DSM 46492 / JCM 5070 / NBRC 14893 / NCIMB 12804 / NRRL 8165 / MA-4680)).